The primary structure comprises 510 residues: Guanosine import ATP-binding protein NupO (510 aa).

ABC transporter domains lie at isoleucine 5–glutamate 240 and leucine 257–threonine 501. An ATP-binding site is contributed by glycine 37 to serine 44.

Belongs to the ABC transporter superfamily. The complex is composed of two ATP-binding proteins (NupO), two transmembrane proteins (NupP and NupQ) and a solute-binding protein (NupN).

The protein localises to the cell membrane. Part of an ABC transporter complex involved in the uptake of guanosine. Responsible for energy coupling to the transport system. May be a nucleoside transporter of broad specificity but with various affinities for different substrates. In Bacillus subtilis (strain 168), this protein is Guanosine import ATP-binding protein NupO.